The sequence spans 672 residues: MTDKERAKLAKAYGKLAQKIQKSYPDINVVYGRDAKNKLHALYQDPETGNIFSLEKRKQLPADYPLFELDSDEPISFAPKIIPLTAFDGNNNEVIVQYDQVNNTFYDQDGNVLDVSGYRDGENIPLVDYLNYGGSTASADTTTSEPLSGEGYPDIDAGLPVVDPDATPEQQADQLFGLDPLPQAPDEYQDTTAPPAYDQTFDQATYDQQAYDQNYDPNAYYDQQAYDQSFDQQAYDQAYDANAYNTQNYDQAHDPNAYYDSQAYSDPDQASAVAPIEVAPLQPEPVAPVVEPTAVPIVESAPIVEVTPTVEPTPTPVVETAPVVEAPKVVEPTPTPVVEATPAPKVEPKVVEQPQPTPVTVEVDSPKVEIPKVVTAKVALQVAQPTPVPAVPKVAPQPTPAPVVVQPTAVVQPVVKAEPKVVTPTPAPQVVVTPQVATPKVTPKVVQTTPAVPPVVVQPEVVVQPIIRPTQPEPEWKPSPASVVEPQPCQSACVNNESGAITIHTTNRSLLLEKLASLGHLHDASTRTPLPHERYQLAPPSEYVATKYNEPLFNLPAIRNSWARFTRPTVESTPIASRFTGVTPMAVNYRNPASLNFDSLNSFGAYRSPSSFYPLRRPLELSSLRRNRSSFFNTHRFDLGSNYTSFTPRYRSPLRGGLSQRFPLRSSWSKEF.

25 repeat units span residues 98-100 (YDQ), 106-108 (YDQ), 160-162 (PVV), 197-199 (YDQ), 206-208 (YDQ), 211-213 (YDQ), 221-223 (YDQ), 226-228 (YDQ), 235-237 (YDQ), 249-251 (YDQ), 288-290 (PVV), 310-319 (VEPTPTPVVE), 312-315 (PTPT), 316-318 (PVV), 322-324 (PVV), 330-339 (VEPTPTPVVE), 332-335 (PTPT), 336-338 (PVV), 354-358 (PQPTP), 385-389 (PTPVP), 396-400 (PQPTP), 402-404 (PVV), 413-415 (PVV), 424-428 (PTPAP), and 454-456 (PVV). The segment at 98–251 (YDQVNNTFYD…NAYNTQNYDQ (154 aa)) is 9 X 3 AA repeats OF Y-D-Q. The interval 160 to 456 (PVVDPDATPE…QTTPAVPPVV (297 aa)) is 8 X 3 AA repeats of P-V-V. Residues 177–197 (GLDPLPQAPDEYQDTTAPPAY) form a disordered region. Residues 310 to 339 (VEPTPTPVVETAPVVEAPKVVEPTPTPVVE) form a 2 X 10 AA repeats of V-E-P-T-P-T-P-V-V-E region. The tract at residues 312–428 (PTPTPVVETA…PKVVTPTPAP (117 aa)) is 6 X 5 AA repeats of P-X-P-X-P.

It is found in the cell projection. The protein localises to the attachment organelle membrane. Its function is as follows. Component of the cytoskeleton-like structure which stabilizes the shape of the wall-less mycoplasma. This cytoskeleton-like network of accessory proteins containing HMW proteins 1 to 5 allows the proper anchoring of cytadhesin proteins in the mycoplasmal membrane at the attachment organelle. Essential for successful surface parasitism. The chain is Cytadherence high molecular weight protein 3 (hmw3) from Mycoplasma pneumoniae (strain ATCC 29342 / M129 / Subtype 1) (Mycoplasmoides pneumoniae).